Here is a 264-residue protein sequence, read N- to C-terminus: Thymidylate synthase (264 aa).

Arg21 is a binding site for dUMP. His51 contributes to the (6R)-5,10-methylene-5,6,7,8-tetrahydrofolate binding site. 126 to 127 lines the dUMP pocket; that stretch reads RR. Cys146 serves as the catalytic Nucleophile. Residues 166–169, Asn177, and 207–209 contribute to the dUMP site; these read RSAD and HLY. Residue Asp169 participates in (6R)-5,10-methylene-5,6,7,8-tetrahydrofolate binding. Ala263 contacts (6R)-5,10-methylene-5,6,7,8-tetrahydrofolate.

This sequence belongs to the thymidylate synthase family. Bacterial-type ThyA subfamily. As to quaternary structure, homodimer.

Its subcellular location is the cytoplasm. It carries out the reaction dUMP + (6R)-5,10-methylene-5,6,7,8-tetrahydrofolate = 7,8-dihydrofolate + dTMP. The protein operates within pyrimidine metabolism; dTTP biosynthesis. Functionally, catalyzes the reductive methylation of 2'-deoxyuridine-5'-monophosphate (dUMP) to 2'-deoxythymidine-5'-monophosphate (dTMP) while utilizing 5,10-methylenetetrahydrofolate (mTHF) as the methyl donor and reductant in the reaction, yielding dihydrofolate (DHF) as a by-product. This enzymatic reaction provides an intracellular de novo source of dTMP, an essential precursor for DNA biosynthesis. The polypeptide is Thymidylate synthase (Chromobacterium violaceum (strain ATCC 12472 / DSM 30191 / JCM 1249 / CCUG 213 / NBRC 12614 / NCIMB 9131 / NCTC 9757 / MK)).